The primary structure comprises 139 residues: Small ribosomal subunit protein uS11 (139 aa).

The protein belongs to the universal ribosomal protein uS11 family. In terms of assembly, part of the 30S ribosomal subunit.

Its function is as follows. Located on the platform of the 30S subunit. The polypeptide is Small ribosomal subunit protein uS11 (Pyrobaculum islandicum (strain DSM 4184 / JCM 9189 / GEO3)).